Reading from the N-terminus, the 1163-residue chain is Voltage-gated inwardly rectifying potassium channel KCNH2 (1163 aa).

Residues 1-405 are Cytoplasmic-facing; that stretch reads MPVRRGHVAP…RIHRWTILHY (405 aa). The 72-residue stretch at 17-88 folds into the PAS domain; that stretch reads TIIRKFEGQS…AAQIAQALLG (72 aa). Positions 92 to 144 constitute a PAC domain; it reads RKVEIAFYRKDGSCFLCLVDVVPVKNEDGAVIMFILNFEVVMEKDMVGSPAHD. Positions 235–286 are disordered; that stretch reads VGPASASPVASIPGPHPSPRAQSLNPDASGSSCSLARTRSRESCASVRRASS. Residues serine 239 and serine 245 each carry the phosphoserine modification. Polar residues predominate over residues 254–271; that stretch reads RAQSLNPDASGSSCSLAR. Serine 285, serine 286, serine 322, and serine 353 each carry phosphoserine. Residues 406–426 form a helical membrane-spanning segment; it reads SPFKAVWDWLILLLVIYTAVF. Topologically, residues 427-452 are extracellular; it reads TPYSAAFLLKETEDGSQAPDCGYACQ. A helical membrane pass occupies residues 453 to 473; the sequence is PLAVVDLLVDIMFIVDILINF. Over 474–497 the chain is Cytoplasmic; sequence RTTYVNANEEVVSHPGRIAVHYFK. The chain crosses the membrane as a helical span at residues 498–518; it reads GWFLIDMVAAIPFDLLIFGSG. The Extracellular portion of the chain corresponds to 519–522; that stretch reads SEEL. A helical; Voltage-sensor transmembrane segment spans residues 523 to 543; it reads IGLLKTARLLRLVRVARKLDR. The Cytoplasmic portion of the chain corresponds to 544-549; it reads YSEYGA. Residues 550–570 traverse the membrane as a helical segment; sequence AVLFLLMCTFALIAHWLACIW. Over 571–613 the chain is Extracellular; that stretch reads YAIGNMEQPHMDSHIGWLHNLGDQIGKPYNSSGLGGPSIKDKY. N-linked (GlcNAc...) asparagine glycosylation occurs at asparagine 600. Residues 614 to 634 constitute an intramembrane region (pore-forming); the sequence is VTALYFTFSSLTSVGFGNVSP. The Selectivity filter signature appears at 626–631; sequence SVGFGN. Topologically, residues 635–640 are extracellular; sequence NTNSEK. Residues 641–661 form a helical membrane-spanning segment; it reads IFSICVMLIGSLMYASIFGNV. Residues 662 to 1163 are Cytoplasmic-facing; that stretch reads SAIIQRLYSG…LHRHGSDPGS (502 aa). Positions 744-844 are cNMP-binding domain; the sequence is PFRGATKGCL…IHRDDLLEVL (101 aa). 2 positions are modified to phosphoserine: serine 873 and serine 876. 3 disordered regions span residues 873-992, 1015-1043, and 1126-1163; these read SPSS…NPLS, ELPRCPAPAPSLLNIPLSSPGRRSRGDVE, and AGAPELPQDGPTRRLSLPGQLGALTSQPLHRHGSDPGS. Over residues 885–894 the composition is skewed to basic residues; that stretch reads RQRKRKLSFR. Positions 932–943 are enriched in low complexity; sequence GESPSSGPSSPE. Arginine 1018 carries the post-translational modification Omega-N-methylarginine. The stretch at 1039-1066 forms a coiled coil; it reads RGDVESRLDALQRQLNRLETRLSADMAT. Serine 1141 carries the phosphoserine modification.

It belongs to the potassium channel family. H (Eag) (TC 1.A.1.20) subfamily. Kv11.1/KCNH2 sub-subfamily. In terms of assembly, the potassium channel is probably composed of a homo- or heterotetrameric complex of pore-forming alpha subunits that can associate with modulating beta subunits. Interacts with DNAJB12 and DNAJB14; chaperones DNAJB12 and DNAJB14 promote tetramerization. Heteromultimer with KCNH6/ERG2 and KCNH7/ERG3. Interacts with ALG10B. Forms a stable complex with KCNE1 or KCNE2, and that this heteromultimerization regulates Inward rectifier potassium channel activity. Interacts with CANX. The core-glycosylated, but not the fully glycosylated form interacts with RNF207. Interacts with NDFIP1 and NDFIP2; this interaction decreases the cell membrane expression by targeting KCNH2, through interaction with NEDD4L, for the degradation through the multivesicular bodies (MVBs)-lysosomal pathway. Phosphorylated on serine and threonine residues. Phosphorylation by PKA inhibits ion conduction. As to expression, highly expressed in brain and testis, slightly less so in heart, adrenal, retina and thymus. Detected at lower levels in lung, soleus, tibialis, and at very low levels in cornea and lens. A shorter transcript is detected in skeletal muscle. Found in pituitary.

It is found in the cell membrane. The enzyme catalyses K(+)(in) = K(+)(out). In terms of biological role, pore-forming (alpha) subunit of voltage-gated inwardly rectifying potassium channel. Characterized by unusual gating kinetics by producing relatively small outward currents during membrane depolarization and large inward currents during subsequent repolarization which reflect a rapid inactivation during depolarization and quick recovery from inactivation but slow deactivation (closing) during repolarization. Channel properties are modulated by cAMP and subunit assembly. Forms a stable complex with KCNE1 or KCNE2, and that this heteromultimerization regulates inward rectifier potassium channel activity. In Rattus norvegicus (Rat), this protein is Voltage-gated inwardly rectifying potassium channel KCNH2.